We begin with the raw amino-acid sequence, 99 residues long: Regulatory protein FanB (99 aa).

Functionally, trans-acting protein involved in the regulation of the biogenesis of K99 fimbriae (FanC). The chain is Regulatory protein FanB (fanB) from Escherichia coli.